The chain runs to 137 residues: MPTINQLVRKPRQSKIKKSTSPALNKGLNSFKRELTDVNSPQKRGVCTRVGTMTPKKPNSALRKYARVRLSNGIEVTAYIPGIGHNLQEHSVVLIRGGRVKDLPGVRYHIVRGALDTAGVENRGQSRSKYGTKKPKK.

The interval 1–26 is disordered; it reads MPTINQLVRKPRQSKIKKSTSPALNK. Positions 9–18 are enriched in basic residues; the sequence is RKPRQSKIKK.

The protein belongs to the universal ribosomal protein uS12 family. As to quaternary structure, part of the 30S ribosomal subunit. Contacts proteins S8 and S17. May interact with IF1 in the 30S initiation complex.

Its function is as follows. With S4 and S5 plays an important role in translational accuracy. In terms of biological role, interacts with and stabilizes bases of the 16S rRNA that are involved in tRNA selection in the A site and with the mRNA backbone. Located at the interface of the 30S and 50S subunits, it traverses the body of the 30S subunit contacting proteins on the other side and probably holding the rRNA structure together. The combined cluster of proteins S8, S12 and S17 appears to hold together the shoulder and platform of the 30S subunit. The chain is Small ribosomal subunit protein uS12 from Listeria innocua serovar 6a (strain ATCC BAA-680 / CLIP 11262).